Reading from the N-terminus, the 138-residue chain is Basic phospholipase A2 chain HDP-1P (138 aa).

Residues 1–16 (MRILWIVAVCLIGVEG) form the signal peptide. Cystine bridges form between Cys-42/Cys-131, Cys-44/Cys-60, Cys-59/Cys-111, Cys-65/Cys-138, Cys-66/Cys-104, Cys-73/Cys-97, and Cys-91/Cys-102. Tyr-43, Gly-45, and Gly-47 together coordinate Ca(2+). The active site involves His-63. Residue Asp-64 participates in Ca(2+) binding. Asp-105 is a catalytic residue.

As to quaternary structure, heterodimer; non-covalently linked. The toxic basic protein has phospholipase A2 activity (chain HDP-1P) and the non-toxic acidic protein functions as its inhibitor (chain HPD-1I (AC A4VBF0)). The cofactor is Ca(2+). In terms of tissue distribution, expressed by the venom gland.

It localises to the secreted. It catalyses the reaction a 1,2-diacyl-sn-glycero-3-phosphocholine + H2O = a 1-acyl-sn-glycero-3-phosphocholine + a fatty acid + H(+). With respect to regulation, enzymatic activity and neurotoxicity are inhibited by Triton X-100, which has been determined to be located in the center of the hydrophobic channel of the enzyme. In terms of biological role, heterodimer: shows the same activities as the monomer, but with a lower potency. Monomer: snake venom phospholipase A2 (PLA2) that shows presynaptic neurotoxicity, anticoagulant activity and that weakly inhibits ADP-induced platelet aggregation. Inhibits exocytosis in pancreatic beta cells, confirming it can act presynaptically in inhibiting the exocytosis of neurotransmitters in neurons. PLA2 catalyzes the calcium-dependent hydrolysis of the 2-acyl groups in 3-sn-phosphoglycerides. The polypeptide is Basic phospholipase A2 chain HDP-1P (Vipera nikolskii (Nikolsky's adder)).